We begin with the raw amino-acid sequence, 254 residues long: 5'-nucleotidase SurE (254 aa).

Asp-8, Asp-9, Ser-38, and Asn-91 together coordinate a divalent metal cation.

Belongs to the SurE nucleotidase family. The cofactor is a divalent metal cation.

The protein localises to the cytoplasm. It carries out the reaction a ribonucleoside 5'-phosphate + H2O = a ribonucleoside + phosphate. Nucleotidase that shows phosphatase activity on nucleoside 5'-monophosphates. This chain is 5'-nucleotidase SurE, found in Anaeromyxobacter sp. (strain K).